A 453-amino-acid polypeptide reads, in one-letter code: uncharacterized protein (453 aa).

This is an uncharacterized protein from Galliformes (FAdV-1).